Reading from the N-terminus, the 352-residue chain is uncharacterized protein (352 aa).

This sequence to M.pneumoniae MPN_633 (in the N-terminal section), and M.pneumoniae MPN_634 (in the C-terminal section).

This is an uncharacterized protein from Mycoplasma pneumoniae (strain ATCC 29342 / M129 / Subtype 1) (Mycoplasmoides pneumoniae).